The following is a 329-amino-acid chain: Diaminopimelate epimerase (329 aa).

Substrate-binding residues include N14 and N73. C82 functions as the Proton donor in the catalytic mechanism. Substrate is bound by residues 83–84 (GN), N170, N206, and 224–225 (ER). C233 serves as the catalytic Proton acceptor. 234-235 (GT) serves as a coordination point for substrate.

This sequence belongs to the diaminopimelate epimerase family. Homodimer.

The protein localises to the cytoplasm. The catalysed reaction is (2S,6S)-2,6-diaminopimelate = meso-2,6-diaminopimelate. It functions in the pathway amino-acid biosynthesis; L-lysine biosynthesis via DAP pathway; DL-2,6-diaminopimelate from LL-2,6-diaminopimelate: step 1/1. Functionally, catalyzes the stereoinversion of LL-2,6-diaminopimelate (L,L-DAP) to meso-diaminopimelate (meso-DAP), a precursor of L-lysine and an essential component of the bacterial peptidoglycan. The sequence is that of Diaminopimelate epimerase from Listeria monocytogenes serotype 4b (strain F2365).